The following is a 347-amino-acid chain: Two pore potassium channel a (347 aa).

Positions 1–11 (MDDNSIQQSLL) are enriched in polar residues. The interval 1–49 (MDDNSIQQSLLADNPNVLQRKPSEGVNRFRRCRSTPSTDPLQGPPEKGS) is disordered. The Cytoplasmic segment spans residues 1 to 65 (MDDNSIQQSL…LFKEMRPSFR (65 aa)). The chain crosses the membrane as a helical span at residues 66–86 (LVGLLLFIYLLVGVLAFYAVM). An intramembrane region (pore-forming) is located at residues 99–118 (DALYFCVVTMTTVGYGDLVP). Residues 125-145 (LLACAFVFMGMAVVALFVSKV) traverse the membrane as a helical segment. The Cytoplasmic portion of the chain corresponds to 146 to 183 (ADYLVEKQEVLFFKALHTNLKGGETKMLRAIETNRIKY). The chain crosses the membrane as a helical span at residues 184–204 (KFYTNALLLVLSIISGTVFLW). Positions 213–232 (DSFYCVCATITTLGYGDKSF) form an intramembrane region, pore-forming. The chain crosses the membrane as a helical span at residues 239 to 259 (VFAVFWIITSTIIMAQFFMYL). Topologically, residues 260-347 (AEIYTERRQK…YDLTLAQSAQ (88 aa)) are cytoplasmic. EF-hand domains follow at residues 276–311 (LTRK…ELGK) and 315–347 (EEIS…QSAQ). Ca(2+)-binding residues include D289, D291, D293, Q295, E300, D328, D330, S332, T334, and D339.

Belongs to the two pore domain potassium channel (TC 1.A.1.7) family. In terms of assembly, homodimer.

Its subcellular location is the vacuole membrane. Its function is as follows. Highly selective inward-rectifying potassium channel that is specifically located in the tonoplast of large vacuoles. Functions independently of the voltage difference across the membrane. The protein is Two pore potassium channel a (TPKA) of Oryza sativa subsp. japonica (Rice).